The sequence spans 148 residues: 3-dehydroquinate dehydratase (148 aa).

The Proton acceptor role is filled by tyrosine 23. Substrate is bound by residues asparagine 75, histidine 81, and aspartate 88. The active-site Proton donor is histidine 101. Residues 102–103 and arginine 112 contribute to the substrate site; that span reads LS.

Belongs to the type-II 3-dehydroquinase family. Homododecamer.

It catalyses the reaction 3-dehydroquinate = 3-dehydroshikimate + H2O. Its pathway is metabolic intermediate biosynthesis; chorismate biosynthesis; chorismate from D-erythrose 4-phosphate and phosphoenolpyruvate: step 3/7. In terms of biological role, catalyzes a trans-dehydration via an enolate intermediate. The chain is 3-dehydroquinate dehydratase from Xanthomonas campestris pv. campestris (strain B100).